A 91-amino-acid polypeptide reads, in one-letter code: Elongation factor 1-beta (91 aa).

This sequence belongs to the EF-1-beta/EF-1-delta family.

Functionally, promotes the exchange of GDP for GTP in EF-1-alpha/GDP, thus allowing the regeneration of EF-1-alpha/GTP that could then be used to form the ternary complex EF-1-alpha/GTP/AAtRNA. The polypeptide is Elongation factor 1-beta (Thermococcus gammatolerans (strain DSM 15229 / JCM 11827 / EJ3)).